The chain runs to 134 residues: Small ribosomal subunit protein uS11 (134 aa).

Belongs to the universal ribosomal protein uS11 family. As to quaternary structure, component of the small ribosomal subunit.

It localises to the cytoplasm. The sequence is that of Small ribosomal subunit protein uS11 (RPS14) from Encephalitozoon cuniculi (strain GB-M1) (Microsporidian parasite).